The following is a 362-amino-acid chain: Chorismate synthase (362 aa).

Arg-46 contributes to the NADP(+) binding site. FMN is bound by residues 122 to 124 (RSS), 238 to 239 (NA), Gly-278, 293 to 297 (KPTPS), and Arg-319.

This sequence belongs to the chorismate synthase family. Homotetramer. It depends on FMNH2 as a cofactor.

The catalysed reaction is 5-O-(1-carboxyvinyl)-3-phosphoshikimate = chorismate + phosphate. It participates in metabolic intermediate biosynthesis; chorismate biosynthesis; chorismate from D-erythrose 4-phosphate and phosphoenolpyruvate: step 7/7. Functionally, catalyzes the anti-1,4-elimination of the C-3 phosphate and the C-6 proR hydrogen from 5-enolpyruvylshikimate-3-phosphate (EPSP) to yield chorismate, which is the branch point compound that serves as the starting substrate for the three terminal pathways of aromatic amino acid biosynthesis. This reaction introduces a second double bond into the aromatic ring system. The sequence is that of Chorismate synthase from Campylobacter jejuni subsp. jejuni serotype O:23/36 (strain 81-176).